Here is a 203-residue protein sequence, read N- to C-terminus: Ribosome hibernation promotion factor (203 aa).

Belongs to the HPF/YfiA ribosome-associated protein family. Long HPF subfamily. In terms of assembly, interacts with 100S ribosomes.

Its subcellular location is the cytoplasm. In terms of biological role, required for dimerization of active 70S ribosomes into 100S ribosomes in stationary phase; 100S ribosomes are translationally inactive and sometimes present during exponential growth. In Bradyrhizobium diazoefficiens (strain JCM 10833 / BCRC 13528 / IAM 13628 / NBRC 14792 / USDA 110), this protein is Ribosome hibernation promotion factor.